The primary structure comprises 491 residues: Zinc finger and SCAN domain-containing protein 22 (491 aa).

Serine 9 carries the phosphoserine modification. The region spanning 49–131 is the SCAN box domain; it reads RLRFRHFRYE…VLVEDLTQVL (83 aa). Disordered stretches follow at residues 134–161 and 204–249; these read RGWDPGAEPTEASCKQSDLGESEPSNVT and FKKT…DKFD. Over residues 214–224 the composition is skewed to basic and acidic residues; the sequence is VPTDQRGRESG. Polar residues predominate over residues 225–241; that stretch reads ASRNSSSAWPNLTSQEK. 8 consecutive C2H2-type zinc fingers follow at residues 268–290, 296–318, 324–346, 352–374, 380–402, 408–430, 436–458, and 464–486; these read SKCRECRKMFQSASALEAHQKTH, YACSECGKAFSRSTHLAQHQVVH, HECKECGKAFSRVTHLTQHQRIH, YKCGECGKTFSRSTHLTQHQRVH, YECDACGKAFSQSTHLTQHQRIH, YKCDACGRAFSDCSALIRHLRIH, YQCKVCPKAFAQSSSLIEHQRIH, and YKCSDCGKAFSRSSALMVHLRIH. Lysine 443 participates in a covalent cross-link: Glycyl lysine isopeptide (Lys-Gly) (interchain with G-Cter in SUMO2).

It belongs to the krueppel C2H2-type zinc-finger protein family.

The protein resides in the nucleus. May be involved in transcriptional regulation. In Homo sapiens (Human), this protein is Zinc finger and SCAN domain-containing protein 22 (ZSCAN22).